The sequence spans 227 residues: MIKKVKIKKFNGRDFYDMEDYVAVEESYNIFINGEFVKSLSMSPNFLNEFAVGFAISEGFLNKIDKVEVDKNNINIFGEKNDREIKNNKNNKEIKIDIEIIKKIISYEIKAKYWEITGSFHWASMFDLKGNSIIFVEDIGRHNAVDKVIGYAILNNYNLNKLILRYSGRIPSDIVKKAINSGLNIIISKSPPTDKAIELAEENNILLIGFARNGKFNIYTSGRLWEE.

Position 210–215 (210–215 (FARNGK)) interacts with Mo-bis(molybdopterin guanine dinucleotide).

The protein belongs to the FdhD family.

It is found in the cytoplasm. Functionally, required for formate dehydrogenase (FDH) activity. The chain is Protein FdhD from Methanocaldococcus jannaschii (strain ATCC 43067 / DSM 2661 / JAL-1 / JCM 10045 / NBRC 100440) (Methanococcus jannaschii).